We begin with the raw amino-acid sequence, 306 residues long: Putative NylC-analogous protein (306 aa).

It belongs to the peptidase S58 family.

This Agromyces sp. (strain KY5R) protein is Putative NylC-analogous protein.